The sequence spans 523 residues: Cytoplasmic dynein 1 light intermediate chain 1 (523 aa).

Residues 1-25 (MAAVGRVGSFGSSPPGLSSTYTGGP) are disordered. Low complexity predominate over residues 9–19 (SFGSSPPGLSS). An ATP-binding site is contributed by 74 to 81 (GEDGAGKT). S207 is modified (phosphoserine). T213 carries the post-translational modification Phosphothreonine. Disordered regions lie at residues 387–434 (PPTA…DPNM) and 456–523 (TGSP…GEAS). 2 positions are modified to phosphoserine: S398 and S405. Position 408 is a phosphothreonine (T408). 4 positions are modified to phosphoserine: S412, S419, S421, and S427. Residues 412–421 (SVSSNVASVS) are compositionally biased toward low complexity. Positions 458–478 (SPGGPGVSGGSPAGGAGGGSS) are enriched in gly residues. S487 carries the phosphoserine modification. The segment covering 493-503 (LDVHAELDRIT) has biased composition (basic and acidic residues). Over residues 506 to 523 (PVTVSPTTPTSPTEGEAS) the composition is skewed to low complexity. Phosphoserine is present on S510. Phosphothreonine is present on residues T512, T513, and T515. At S516 the chain carries Phosphoserine.

The protein belongs to the dynein light intermediate chain family. Homodimer. The cytoplasmic dynein 1 complex consists of two catalytic heavy chains (HCs) and a number of non-catalytic subunits presented by intermediate chains (ICs), light intermediate chains (LICs) and light chains (LCs); the composition seems to vary in respect to the IC, LIC and LC composition. The heavy chain homodimer serves as a scaffold for the probable homodimeric assembly of the respective non-catalytic subunits. The ICs and LICs bind directly to the HC dimer and the LCs assemble on the IC dimer. Self-associates. Interacts with DYNC1H1; DYNC1LI1 and DYNC1LI2 bind mutually exclusive to DYNC1H1. Interacts with PCNT. Forms a complex with RAB11FIP3 and RAB11A1; the interaction between DYNC1LI1 and RAB11FIP3 is direct and induces DYNC1LI1 localization onto endosomal membrane; the complex regulates endocytic trafficking. Interacts with RUFY3. In terms of assembly, (Microbial infection) Interacts with human adenovirus 5 hexon protein; this interaction probably allows virus intracellular transport. Phosphorylated during mitosis but not in interphase.

Its subcellular location is the cytoplasm. It localises to the chromosome. It is found in the centromere. The protein resides in the kinetochore. The protein localises to the cytoskeleton. Its subcellular location is the spindle pole. It localises to the recycling endosome membrane. Its function is as follows. Acts as one of several non-catalytic accessory components of the cytoplasmic dynein 1 complex that are thought to be involved in linking dynein to cargos and to adapter proteins that regulate dynein function. Cytoplasmic dynein 1 acts as a motor for the intracellular retrograde motility of vesicles and organelles along microtubules. May play a role in binding dynein to membranous organelles or chromosomes. Probably involved in the microtubule-dependent transport of pericentrin. Is required for progress through the spindle assembly checkpoint. The phosphorylated form appears to be involved in the selective removal of MAD1L1 and MAD1L2 but not BUB1B from kinetochores. Forms a functional Rab11/RAB11FIP3/dynein complex onto endosomal membrane that regulates the movement of peripheral sorting endosomes (SE) along microtubule tracks toward the microtubule organizing center/centrosome, generating the endosomal recycling compartment (ERC). The polypeptide is Cytoplasmic dynein 1 light intermediate chain 1 (DYNC1LI1) (Homo sapiens (Human)).